A 428-amino-acid chain; its full sequence is Light-independent protochlorophyllide reductase subunit N (428 aa).

3 residues coordinate [4Fe-4S] cluster: Cys29, Cys54, and Cys115.

Belongs to the BchN/ChlN family. As to quaternary structure, protochlorophyllide reductase is composed of three subunits; BchL, BchN and BchB. Forms a heterotetramer of two BchB and two BchN subunits. The cofactor is [4Fe-4S] cluster.

The catalysed reaction is chlorophyllide a + oxidized 2[4Fe-4S]-[ferredoxin] + 2 ADP + 2 phosphate = protochlorophyllide a + reduced 2[4Fe-4S]-[ferredoxin] + 2 ATP + 2 H2O. Its pathway is porphyrin-containing compound metabolism; bacteriochlorophyll biosynthesis (light-independent). Functionally, component of the dark-operative protochlorophyllide reductase (DPOR) that uses Mg-ATP and reduced ferredoxin to reduce ring D of protochlorophyllide (Pchlide) to form chlorophyllide a (Chlide). This reaction is light-independent. The NB-protein (BchN-BchB) is the catalytic component of the complex. The polypeptide is Light-independent protochlorophyllide reductase subunit N (Cereibacter sphaeroides (strain ATCC 17023 / DSM 158 / JCM 6121 / CCUG 31486 / LMG 2827 / NBRC 12203 / NCIMB 8253 / ATH 2.4.1.) (Rhodobacter sphaeroides)).